A 546-amino-acid polypeptide reads, in one-letter code: Glutamate--tRNA ligase (546 aa).

The 'HIGH' region motif lies at 41–51 (PSPTGFQHIGG). The 'KMSKS' region signature appears at 293 to 297 (KLSKR). Lys-296 provides a ligand contact to ATP.

The protein belongs to the class-I aminoacyl-tRNA synthetase family. Glutamate--tRNA ligase type 1 subfamily. Monomer.

Its subcellular location is the cytoplasm. The enzyme catalyses tRNA(Glu) + L-glutamate + ATP = L-glutamyl-tRNA(Glu) + AMP + diphosphate. Functionally, catalyzes the attachment of glutamate to tRNA(Glu) in a two-step reaction: glutamate is first activated by ATP to form Glu-AMP and then transferred to the acceptor end of tRNA(Glu). In Clostridium perfringens (strain 13 / Type A), this protein is Glutamate--tRNA ligase.